The following is a 142-amino-acid chain: Large ribosomal subunit protein uL11 (142 aa).

The protein belongs to the universal ribosomal protein uL11 family. Part of the ribosomal stalk of the 50S ribosomal subunit. Interacts with L10 and the large rRNA to form the base of the stalk. L10 forms an elongated spine to which L12 dimers bind in a sequential fashion forming a multimeric L10(L12)X complex. Post-translationally, one or more lysine residues are methylated.

Its function is as follows. Forms part of the ribosomal stalk which helps the ribosome interact with GTP-bound translation factors. This is Large ribosomal subunit protein uL11 from Cronobacter sakazakii (strain ATCC BAA-894) (Enterobacter sakazakii).